A 114-amino-acid chain; its full sequence is Phosphorelay protein LuxU (114 aa).

The HPt domain maps to 19–114; that stretch reads GSDNVPVLLD…TRDAYRSWTN (96 aa). Histidine 58 carries the phosphohistidine modification.

Monomer.

Functionally, phosphorelay protein which receives sensory signals from LuxN and LuxP and transmits them to LuxO, at low cell density. LuxN and LuxP transfer a phosphoryl group to LuxU on His-58 and this phosphoryl group is further transferred to LuxO. At high cell density, as LuxU could function to establish an equilibrium between the aspartyl-phosphate of LuxN and the aspartyl-phosphate of LuxO, LuxU transfers phosphate from LuxO to LuxN (and probably LuxP) and finally phosphate is drained from the system. In Vibrio harveyi (Beneckea harveyi), this protein is Phosphorelay protein LuxU (luxU).